A 484-amino-acid chain; its full sequence is MWYVSTRGIAPRVNFEGALFSGYAPDGGLFMPEELPQLDRKTLCQWSTLSYPGLVKELCALFIGSELIPKDELNDLIDRAFSRFRHREVVHLSRLRNGLNVLELWHGVTYAFKDLSLSCTAQFLQYFLEKREKHVTVVVGTSGDTGSAAIESVQGAKNMDIIVLLPKGHCTKIQELQMTTVLKENVHVFGVEGNSDELDEPIKTVFADVAFVKKHNLMSLNSINWSRVLVQMAHHFFAYFQCMPSLDTHPLPLVEVVVPTGAAGNLAAGYIAQKIGLPVRLVVAVNGNDIIHRTVQQGDFSLSEAVKSTLASAMDIQVPYNMERVFWLLSGSDSQVTRALMEQFERTQSVNLPKELHSKLSEAVTSVSVSDEAITQTMGRCWDENQYLLCPHSAVAVNYHYQQMDRQQPSTPRCCLAPASAAKFPEAVLAAGLTPETPAEIVALEHKETRCTPMRRGDNWMLMLRDTIEDLSRRWRSHALNTSR.

At lysine 113 the chain carries N6-(pyridoxal phosphate)lysine.

It belongs to the threonine synthase family. Pyridoxal 5'-phosphate serves as cofactor.

Its function is as follows. Acts as a catabolic phospho-lyase on both gamma- and beta-phosphorylated substrates. Degrades O-phospho-threonine (PThr) to alpha-ketobutyrate, ammonia and phosphate. The sequence is that of Threonine synthase-like 2 (THNSL2) from Pongo abelii (Sumatran orangutan).